The primary structure comprises 467 residues: MSKGTLFDKVWDLHTVKVLPSGQTQLFIGLHLIHEVTSPQAFAMLRDRNLQVMYPERTVATVDHIVPTENQARPFADPLAEAMMQELEKNTATNKIRFYNVGSGGQGIVHVIAPEQGLTQPGMTVACGDSHTSTHGAFGAIAFGIGTSQVRDVLASQTLALAKLKVRKIEVNGDLQPGVYAKDVILHIIRKLGVKGGVGYAYEYAGTTFEKMSMEERMTVCNMSIEGGARCGYVNPDSVTYDYLKDRPFAPKGEAWEKAIAWWDSLRSEADAEYDDVVTFDAADIAPTVTWGITPGQGIGVDESVPTPEMMAEDEQAIAAEAYKYMQLQPGQAIQGTKIDVCFIGSCTNGRLSDLQEAAKYAKGHHVAPGVKAFVVPGSEQVKQQAEAEGLDRIFTEAGFEWREPGCSMCLAMNPDKLEGNQISASSSNRNFKGRQGSATGRTLLMSPAMVVAAAVTGQVTDVRTLN.

[4Fe-4S] cluster-binding residues include Cys-347, Cys-407, and Cys-410.

The protein belongs to the aconitase/IPM isomerase family. LeuC type 1 subfamily. In terms of assembly, heterodimer of LeuC and LeuD. [4Fe-4S] cluster serves as cofactor.

It carries out the reaction (2R,3S)-3-isopropylmalate = (2S)-2-isopropylmalate. It functions in the pathway amino-acid biosynthesis; L-leucine biosynthesis; L-leucine from 3-methyl-2-oxobutanoate: step 2/4. Its function is as follows. Catalyzes the isomerization between 2-isopropylmalate and 3-isopropylmalate, via the formation of 2-isopropylmaleate. The polypeptide is 3-isopropylmalate dehydratase large subunit (Picosynechococcus sp. (strain ATCC 27264 / PCC 7002 / PR-6) (Agmenellum quadruplicatum)).